A 523-amino-acid chain; its full sequence is MSDRVIIFDTTLRDGEQALAASLTVKEKLQIALALERLGVDVMEVGFPVSSPGDFESVQTIARTVKNSRVCALSRALEKDIDAAAQALSVADQFRIHTFISTSTIHVESKLKRSFDQVLEMAVGAVKYARRFTDDVEFSCEDAGRTPIDNLCRMVEEAIKAGARTINIPDTVGYTVPSEFGGIIQTLFNRVPNIDQAVISVHCHDDLGLSVANSITAVQHGARQIECTVNGIGERAGNCSLEEIAMILSTRKGELGLETGINAKEIHRTSSLVSQLCNMPVQANKAIVGANAFTHSSGIHQDGMLKAQNTYEIMTPESIGLNRNNLNMTSRSGRHVIKHRMSELGYGDQDYDMDVLYEDFLVLADKKGQVFDYDLEALAFMEAQAEDDDHFKLQQLVVHSDSTEGSATATVKVEVNGETVTEAAIGNGPVDAAYKAVARASGCEIDITSYQLGAKGEGQNALGQVDITASYRNQNFHGVGLATDVVEASVKALVHVMNLTWRADKVADCKQKIQQEKQVLGGV.

Residues 5 to 267 form the Pyruvate carboxyltransferase domain; the sequence is VIIFDTTLRD…ETGINAKEIH (263 aa). Mn(2+)-binding residues include D14, H202, H204, and N238. Residues 392–523 form a regulatory domain region; that stretch reads KLQQLVVHSD…QQEKQVLGGV (132 aa).

It belongs to the alpha-IPM synthase/homocitrate synthase family. LeuA type 1 subfamily. As to quaternary structure, homodimer. Mn(2+) is required as a cofactor.

The protein resides in the cytoplasm. The enzyme catalyses 3-methyl-2-oxobutanoate + acetyl-CoA + H2O = (2S)-2-isopropylmalate + CoA + H(+). Its pathway is amino-acid biosynthesis; L-leucine biosynthesis; L-leucine from 3-methyl-2-oxobutanoate: step 1/4. Catalyzes the condensation of the acetyl group of acetyl-CoA with 3-methyl-2-oxobutanoate (2-ketoisovalerate) to form 3-carboxy-3-hydroxy-4-methylpentanoate (2-isopropylmalate). In Shewanella piezotolerans (strain WP3 / JCM 13877), this protein is 2-isopropylmalate synthase.